The following is a 78-amino-acid chain: Leukemia-associated protein 1 (78 aa).

Its function is as follows. May act as a tumor suppressor. The sequence is that of Leukemia-associated protein 1 (DLEU1) from Homo sapiens (Human).